The chain runs to 173 residues: Crossover junction endodeoxyribonuclease RuvC (173 aa).

Active-site residues include aspartate 8, glutamate 67, and aspartate 139. Residues aspartate 8, glutamate 67, and aspartate 139 each contribute to the Mg(2+) site.

Belongs to the RuvC family. Homodimer which binds Holliday junction (HJ) DNA. The HJ becomes 2-fold symmetrical on binding to RuvC with unstacked arms; it has a different conformation from HJ DNA in complex with RuvA. In the full resolvosome a probable DNA-RuvA(4)-RuvB(12)-RuvC(2) complex forms which resolves the HJ. It depends on Mg(2+) as a cofactor.

The protein localises to the cytoplasm. It catalyses the reaction Endonucleolytic cleavage at a junction such as a reciprocal single-stranded crossover between two homologous DNA duplexes (Holliday junction).. The RuvA-RuvB-RuvC complex processes Holliday junction (HJ) DNA during genetic recombination and DNA repair. Endonuclease that resolves HJ intermediates. Cleaves cruciform DNA by making single-stranded nicks across the HJ at symmetrical positions within the homologous arms, yielding a 5'-phosphate and a 3'-hydroxyl group; requires a central core of homology in the junction. The consensus cleavage sequence is 5'-(A/T)TT(C/G)-3'. Cleavage occurs on the 3'-side of the TT dinucleotide at the point of strand exchange. HJ branch migration catalyzed by RuvA-RuvB allows RuvC to scan DNA until it finds its consensus sequence, where it cleaves and resolves the cruciform DNA. This is Crossover junction endodeoxyribonuclease RuvC from Shewanella woodyi (strain ATCC 51908 / MS32).